We begin with the raw amino-acid sequence, 284 residues long: MADAKAVAKAELKSKDFVPRGNKSSSPLNTTLYLGLRALDCYIQYLILSRATGSFIIKFFGGSIIPHGPPVEAGFMHIEKLGLSGYRLLLLFMDILAAAKHFWFVLTVAEEAWTLTGAIVVGLDNIFFDTLNNLLFLCAATSAASSKAGGETLANPYLATGFIIFAVGLVTECVCEIDRKVFKKNPMNKGKPYTGGLFSLVRHPNYTAFTIWRSGLALASGGMIYGMSIAMFFMWDFSNRAVPALDEYCTKRVSYGPRDSTSTNWSRIWLLMTSSLVRRYVGRV.

N-linked (GlcNAc...) asparagine glycosylation is found at N22 and N29. 2 consecutive transmembrane segments (helical) span residues 88–108 (LLLL…VLTV) and 157–177 (YLAT…VCEI). N-linked (GlcNAc...) asparagine glycosylation is present at N205. A helical membrane pass occupies residues 215-235 (GLALASGGMIYGMSIAMFFMW). The N-linked (GlcNAc...) asparagine glycan is linked to N264.

Belongs to the class VI-like SAM-binding methyltransferase superfamily. Isoprenylcysteine carboxyl methyltransferase family.

The protein localises to the membrane. Its pathway is secondary metabolite biosynthesis. Probable O-methyltransferase; part of the gene cluster that mediates the biosynthesis of ustilaginoidins, dimeric gamma-naphthopyrones isolated from different fungal species. The first step in the biosynthesis of ustilaginoidins is the production of gamma-naphthopyrone precursor YWA1 by the non-reducing polyketide synthase ustP, via condensation of one acetyl-CoA starter unit with 6 malonyl-CoA units. YWA1 is then probably substrate of the ustZ to yield norrubrofusarin via a dehydration reaction. A key enzyme in the biosynthetic pathway is the laccase ustL, which catalyzes the oxidative dimerization of norrubrofusarin to ustilaginoidin A. It can produce the M- and P-atropisomers in varying amounts, depending on the reaction conditions. For the biosynthesis of 3-methylustilaginoid in derivatives such as chaetochromin A, a methylated derivative of YWA1 is required. The C-methylation is considered to be catalyzed by ustM, the phosphopantetheine attachment site of which indicates that it acts on the growing polyketide chain before release of the product. For the biosynthesis of chaetochromin A, it is assumed that saturation of the D2 double bond takes place before dimerization, and is probably catalyzed by an external reductase because no candidate gene was identified within the cluster. The polypeptide is Probable O-methyltransferase ustE (Ustilaginoidea virens (Rice false smut fungus)).